Consider the following 166-residue polypeptide: MSNHDQKRDEGYIEKLVQVNRVAKTVKGGRIFTFTALTVVGDGKGRVGFGRGKSREVPAAIQKAMEAARRNMIQVDLNGTTLQYAMKSAHGASKVYMQPASEGTGIIAGGAMRAVLEVAGVQNVLAKCYGSTNPVNVVHATFKGLKGMQSPESIAAKRGKRVEEII.

An S5 DRBM domain is found at 12 to 75; that stretch reads YIEKLVQVNR…EAARRNMIQV (64 aa).

This sequence belongs to the universal ribosomal protein uS5 family. In terms of assembly, part of the 30S ribosomal subunit. Contacts proteins S4 and S8.

Its function is as follows. With S4 and S12 plays an important role in translational accuracy. Functionally, located at the back of the 30S subunit body where it stabilizes the conformation of the head with respect to the body. This is Small ribosomal subunit protein uS5 from Pseudomonas syringae pv. tomato (strain ATCC BAA-871 / DC3000).